A 399-amino-acid polypeptide reads, in one-letter code: Sister chromatid cohesion protein DCC1 (399 aa).

This sequence belongs to the DCC1 family. As to quaternary structure, component of the CTF18-RFC complex which consists of CTF8, CTF18, DSCC1 and the RFC complex. Interacts with CTF8 and CTF18. Interacts with DDX11.

The protein localises to the nucleus. Loads PCNA onto primed templates regulating velocity, spacing and restart activity of replication forks. May couple DNA replication to sister chromatid cohesion through regulation of the acetylation of the cohesin subunit SMC3. The polypeptide is Sister chromatid cohesion protein DCC1 (DSCC1) (Mus musculus (Mouse)).